The following is a 90-amino-acid chain: Small ribosomal subunit protein bS16 (90 aa).

The protein belongs to the bacterial ribosomal protein bS16 family.

The chain is Small ribosomal subunit protein bS16 from Streptococcus gordonii (strain Challis / ATCC 35105 / BCRC 15272 / CH1 / DL1 / V288).